Consider the following 181-residue polypeptide: Alkyl hydroperoxide reductase AhpD (181 aa).

C131 (proton donor) is an active-site residue. Residues C131 and C134 are joined by a disulfide bond. The Cysteine sulfenic acid (-SOH) intermediate role is filled by C134.

Belongs to the AhpD family.

It catalyses the reaction N(6)-[(R)-dihydrolipoyl]-L-lysyl-[lipoyl-carrier protein] + a hydroperoxide = N(6)-[(R)-lipoyl]-L-lysyl-[lipoyl-carrier protein] + an alcohol + H2O. Functionally, antioxidant protein with alkyl hydroperoxidase activity. Required for the reduction of the AhpC active site cysteine residues and for the regeneration of the AhpC enzyme activity. In Bradyrhizobium sp. (strain BTAi1 / ATCC BAA-1182), this protein is Alkyl hydroperoxide reductase AhpD.